Consider the following 309-residue polypeptide: Glutaminase (309 aa).

Positions 64, 114, 160, 167, 191, 243, and 261 each coordinate substrate.

The protein belongs to the glutaminase family. In terms of assembly, homotetramer.

It carries out the reaction L-glutamine + H2O = L-glutamate + NH4(+). This Methylobacterium sp. (strain 4-46) protein is Glutaminase.